We begin with the raw amino-acid sequence, 687 residues long: Bifunctional lysine-specific demethylase and histidyl-hydroxylase NO66 (687 aa).

The disordered stretch occupies residues 1 to 174; sequence MSDKNKKVSA…RSCPLPSKKN (174 aa). Over residues 23 to 32 the composition is skewed to basic and acidic residues; it reads DVQKGTKNSD. Low complexity-rich tracts occupy residues 33–50 and 58–74; these read KNGA…SKNG and KKNG…SSSS. A compositionally biased stretch (acidic residues) spans 75-96; it reads GEDEEDDSTDSSDEYESSESGE. Composition is skewed to polar residues over residues 100–116 and 136–156; these read LNSH…ANTR and RTSS…QQPK. The JmjC domain maps to 347-483; sequence NPSSYLVQLR…NLMEKLMPLV (137 aa). Residues His-387, Asp-389, and His-449 each coordinate Fe cation.

It belongs to the ROX family. NO66 subfamily. The cofactor is Fe(2+).

Its subcellular location is the nucleus. The enzyme catalyses N(6),N(6)-dimethyl-L-lysyl(36)-[histone H3] + 2 2-oxoglutarate + 2 O2 = L-lysyl(36)-[histone H3] + 2 formaldehyde + 2 succinate + 2 CO2. Oxygenase that can act as both a histone lysine demethylase and a ribosomal histidine hydroxylase. Specifically demethylates 'Lys-4' (H3K4me) and 'Lys-36' (H3K36me) of histone H3, thereby playing a central role in histone code. The sequence is that of Bifunctional lysine-specific demethylase and histidyl-hydroxylase NO66 from Drosophila persimilis (Fruit fly).